The sequence spans 296 residues: MVVSLSLHASSSIRKSKTKASLCLDSLPEDLLVEISSCTGASSLSAVRNLRLVSKSFRRICDEKYVFYRLSLKEIEFLPWHENSAKFIERCTESRNPEALFQKGFINYFRDKLQDRGLEYLAEAAEKGIKEAKYVYGVILICLGGKTKQKGFEILSSVIKQLMSTTMNELVEFRYKIQKIRYGFWWSDNTVVEQLKTAYVSEKCKCDCKTRMLLLVMNRGWYLFGDETDLDFSSACELYLYINRNFPFEAKKSKIDGEIYWACEFEPNRFVRTEPNRGLDKSVRLRLIEYNRSVSV.

The F-box domain occupies 21–70 (SLCLDSLPEDLLVEISSCTGASSLSAVRNLRLVSKSFRRICDEKYVFYRL).

In Arabidopsis thaliana (Mouse-ear cress), this protein is Putative F-box protein At1g67623.